Consider the following 386-residue polypeptide: 17-hydroxy-3-oxo-4-pregnene-20-carboxyl-CoA lyase (386 aa).

Catalysis depends on Y292, which acts as the Proton acceptor. The active-site Proton donor is Y342.

This sequence belongs to the thiolase-like superfamily. In terms of assembly, homodimer. Interacts with the ChsH1/ChsH2 hydratase via the DUF35 C-terminal region of ChsH2 (ChsH2-DUF35). The ChsH1-ChsH2-Ltp2 protein complex is composed of two protomers that form a heterohexameric structure through the Ltp2 dimerization interface.

The catalysed reaction is 17-hydroxy-3-oxochol-4-en-22-oyl-CoA = androst-4-ene-3,17-dione + propanoyl-CoA. The protein operates within steroid metabolism; cholesterol degradation. Functionally, involved in cholesterol side chain degradation. When associated with the ChsH1/ChsH2 hydratase, catalyzes the retroaldol cleavage of 17-hydroxy-3-oxo-4-pregnene-20-carboxyl-CoA (17-HOPC-CoA) produced by the hydratase, forming androst-4-ene-3,17-dione and propionyl-CoA. This is 17-hydroxy-3-oxo-4-pregnene-20-carboxyl-CoA lyase from Mycobacterium tuberculosis (strain ATCC 25618 / H37Rv).